We begin with the raw amino-acid sequence, 231 residues long: Dephospho-CoA kinase domain-containing protein (231 aa).

A DPCK domain is found at 3 to 207 (LVGLTGGIAS…RSMEYLPLRL (205 aa)). 8–15 (GGIASGKS) is an ATP binding site.

Belongs to the CoaE family.

This Mus musculus (Mouse) protein is Dephospho-CoA kinase domain-containing protein (Dcakd).